The primary structure comprises 24 residues: Ascaphin-2 (24 aa).

In terms of tissue distribution, expressed by the skin glands.

Its subcellular location is the secreted. Its function is as follows. Antimicrobial peptide that shows higher potency against Gram-negative bacteria than against Gram-positive bacteria. Has a very week hemolytic activity. The sequence is that of Ascaphin-2 from Ascaphus truei (Coastal tailed frog).